We begin with the raw amino-acid sequence, 314 residues long: MYPRSRVVGPGLGTSSSSRDHAGAGQHGELDLQQNQRQNLEVAEPKGPKLERQGHGDQRSTGTYTLIAPNETRRQKIQRIAEQELADLERWKQQNKAKPVHLVPQRLGGSQSEAEVRQKQQLQQMRSKYQQKLKRDEAIRIRKDAEEAELQRMKAIQREKSNKLEKKKQLQEDIRRATLREHHQSKTAELLSRLDTDRTNRSACNIAPPAAQSSRWKLPVLLRDPSRAGSQAHKDSPQKEDNQKLQKTRDGHQKNKLLETKGQHQEEERAQIHQAEHWRVNNAFLDRLQGKSQPGGVEQSGGCWNMNSTDGWGI.

4 disordered regions span residues 1 to 72 (MYPR…PNET), 200 to 219 (NRSA…WKLP), 225 to 267 (PSRA…HQEE), and 292 to 314 (SQPG…GWGI). A compositionally biased stretch (basic and acidic residues) spans 43-58 (AEPKGPKLERQGHGDQ). Residues 71-180 (ETRRQKIQRI…QEDIRRATLR (110 aa)) adopt a coiled-coil conformation. The segment covering 232-267 (AHKDSPQKEDNQKLQKTRDGHQKNKLLETKGQHQEE) has biased composition (basic and acidic residues). Polar residues predominate over residues 305 to 314 (NMNSTDGWGI).

Its function is as follows. Plays a role in M1 macrophage polarization and is required for the proper regulation of gene expression during M1 versus M2 macrophage differentiation. Might play a role in RELA/p65 and STAT1 phosphorylation and nuclear localization upon activation of macrophages. In Rattus norvegicus (Rat), this protein is Epithelial-stromal interaction protein 1 (Epsti1).